The sequence spans 230 residues: ATP synthase subunit a (230 aa).

Helical transmembrane passes span 17–37, 78–98, 107–127, 165–187, and 198–218; these read LPIT…FIMA, IFPF…IGVI, DLSV…WFGI, LFGN…GFLV, and EAII…AGGI.

This sequence belongs to the ATPase A chain family. As to quaternary structure, F-type ATPases have 2 components, CF(1) - the catalytic core - and CF(0) - the membrane proton channel. CF(1) has five subunits: alpha(3), beta(3), gamma(1), delta(1), epsilon(1). CF(0) has three main subunits: a(1), b(2) and c(9-12). The alpha and beta chains form an alternating ring which encloses part of the gamma chain. CF(1) is attached to CF(0) by a central stalk formed by the gamma and epsilon chains, while a peripheral stalk is formed by the delta and b chains.

Its subcellular location is the cell inner membrane. In terms of biological role, key component of the proton channel; it plays a direct role in the translocation of protons across the membrane. This Legionella pneumophila subsp. pneumophila (strain Philadelphia 1 / ATCC 33152 / DSM 7513) protein is ATP synthase subunit a.